The primary structure comprises 506 residues: 2-isopropylmalate synthase (506 aa).

The Pyruvate carboxyltransferase domain occupies 8-272 (LIVFDTTLRD…ETGIQLKEIL (265 aa)). The Mn(2+) site is built by Asp-17, His-206, His-208, and Asn-242. The regulatory domain stretch occupies residues 396–506 (ELEYVAVTVC…YLNAVNKALL (111 aa)).

The protein belongs to the alpha-IPM synthase/homocitrate synthase family. LeuA type 1 subfamily. As to quaternary structure, homodimer. Mn(2+) is required as a cofactor.

Its subcellular location is the cytoplasm. The enzyme catalyses 3-methyl-2-oxobutanoate + acetyl-CoA + H2O = (2S)-2-isopropylmalate + CoA + H(+). The protein operates within amino-acid biosynthesis; L-leucine biosynthesis; L-leucine from 3-methyl-2-oxobutanoate: step 1/4. Functionally, catalyzes the condensation of the acetyl group of acetyl-CoA with 3-methyl-2-oxobutanoate (2-ketoisovalerate) to form 3-carboxy-3-hydroxy-4-methylpentanoate (2-isopropylmalate). The sequence is that of 2-isopropylmalate synthase from Methylacidiphilum infernorum (isolate V4) (Methylokorus infernorum (strain V4)).